The primary structure comprises 377 residues: Succinyl-diaminopimelate desuccinylase (377 aa).

Zn(2+) is bound at residue histidine 66. The active site involves aspartate 68. Aspartate 99 provides a ligand contact to Zn(2+). The active-site Proton acceptor is the glutamate 133. Glutamate 134, glutamate 162, and histidine 348 together coordinate Zn(2+).

This sequence belongs to the peptidase M20A family. DapE subfamily. As to quaternary structure, homodimer. It depends on Zn(2+) as a cofactor. The cofactor is Co(2+).

It carries out the reaction N-succinyl-(2S,6S)-2,6-diaminopimelate + H2O = (2S,6S)-2,6-diaminopimelate + succinate. It functions in the pathway amino-acid biosynthesis; L-lysine biosynthesis via DAP pathway; LL-2,6-diaminopimelate from (S)-tetrahydrodipicolinate (succinylase route): step 3/3. Functionally, catalyzes the hydrolysis of N-succinyl-L,L-diaminopimelic acid (SDAP), forming succinate and LL-2,6-diaminopimelate (DAP), an intermediate involved in the bacterial biosynthesis of lysine and meso-diaminopimelic acid, an essential component of bacterial cell walls. The polypeptide is Succinyl-diaminopimelate desuccinylase (Xylella fastidiosa (strain M12)).